The sequence spans 311 residues: N-acetylmuramic acid 6-phosphate etherase (311 aa).

The SIS domain occupies 66–229; the sequence is VADRMARGGR…STITMIRLGK (164 aa). Glutamate 94 functions as the Proton donor in the catalytic mechanism. Glutamate 125 is an active-site residue.

Belongs to the GCKR-like family. MurNAc-6-P etherase subfamily. As to quaternary structure, homodimer.

The enzyme catalyses N-acetyl-D-muramate 6-phosphate + H2O = N-acetyl-D-glucosamine 6-phosphate + (R)-lactate. It functions in the pathway amino-sugar metabolism; N-acetylmuramate degradation. Functionally, specifically catalyzes the cleavage of the D-lactyl ether substituent of MurNAc 6-phosphate, producing GlcNAc 6-phosphate and D-lactate. The chain is N-acetylmuramic acid 6-phosphate etherase from Streptomyces avermitilis (strain ATCC 31267 / DSM 46492 / JCM 5070 / NBRC 14893 / NCIMB 12804 / NRRL 8165 / MA-4680).